A 492-amino-acid chain; its full sequence is Solute carrier family 2, facilitated glucose transporter member 1 (492 aa).

Met1 is subject to N-acetylmethionine. The Cytoplasmic segment spans residues 1–11 (MDPSSKKVTGR). A helical transmembrane segment spans residues 12–33 (LMLAVGGAVLGSLQFGYNTGVI). The Extracellular portion of the chain corresponds to 34–66 (NAPQKVIEEFYNQTWNHRYGEPIPSTTLTTLWS). The N-linked (GlcNAc...) asparagine glycan is linked to Asn45. Residues 67 to 87 (LSVAIFSVGGMIGSFSVGLFV) form a helical membrane-spanning segment. Topologically, residues 88-90 (NRF) are cytoplasmic. The chain crosses the membrane as a helical span at residues 91 to 112 (GRRNSMLMMNLLAFVAAVLMGF). At 113–120 (SKLGKSFE) the chain is on the extracellular side. A helical transmembrane segment spans residues 121–144 (MLILGRFIIGVYCGLTTGFVPMYV). Topologically, residues 145-155 (GEVSPTALRGA) are cytoplasmic. Residues 156–176 (LGTLHQLGIVVGILIAQVFGL) traverse the membrane as a helical segment. Gln161 provides a ligand contact to D-glucose. Residues 177-185 (DSIMGNADL) lie on the Extracellular side of the membrane. The chain crosses the membrane as a helical span at residues 186-206 (WPLLLSVIFIPALLQCILLPF). Residues 207–271 (CPESPRFLLI…LFRSPAYRQP (65 aa)) lie on the Cytoplasmic side of the membrane. Phosphoserine is present on Ser226. The helical transmembrane segment at 272–293 (ILIAVVLQLSQQLSGINAVFYY) threads the bilayer. D-glucose is bound by residues 282-283 (QQ) and Asn288. Residues 294–306 (STSIFEKAGVQQP) are Extracellular-facing. Residues 307 to 328 (VYATIGSGIVNTAFTVVSLFVV) form a helical membrane-spanning segment. Asn317 lines the D-glucose pocket. Residues 329-334 (ERAGRR) lie on the Cytoplasmic side of the membrane. Residues 335 to 355 (TLHLIGLAGMAGCAVLMTIAL) traverse the membrane as a helical segment. Residues 356–365 (ALLERLPWMS) lie on the Extracellular side of the membrane. Residues 366–388 (YLSIVAIFGFVAFFEVGPGPIPW) traverse the membrane as a helical segment. 2 residues coordinate D-glucose: Glu380 and Trp388. Topologically, residues 389–401 (FIVAELFSQGPRP) are cytoplasmic. A helical transmembrane segment spans residues 402–422 (AAIAVAGFSNWTSNFIVGMCF). At 423–429 (QYVEQLC) the chain is on the extracellular side. The chain crosses the membrane as a helical span at residues 430-450 (GPYVFIIFTVLLVLFFIFTYF). The Cytoplasmic portion of the chain corresponds to 451 to 492 (KVPETKGRTFDEIASGFRQGGASQSDKTPEELFHPLGADSQV). Position 465 is a phosphoserine (Ser465). The segment at 468-492 (RQGGASQSDKTPEELFHPLGADSQV) is disordered. Thr478 is modified (phosphothreonine). Ser490 is modified (phosphoserine).

The protein belongs to the major facilitator superfamily. Sugar transporter (TC 2.A.1.1) family. Glucose transporter subfamily. As to quaternary structure, found in a complex with ADD2, DMTN and SLC2A1. Interacts (via C-terminus cytoplasmic region) with DMTN isoform 2. Interacts with SNX27; the interaction is required when endocytosed to prevent degradation in lysosomes and promote recycling to the plasma membrane. Interacts with GIPC (via PDZ domain). Interacts with STOM. Interacts with SGTA (via Gln-rich region). Interacts with isoform 1 of BSG. Interacts with SMIM43; the interaction may promote SLC2A1-mediated glucose transport to meet the energy needs of mesendoderm differentiation. Post-translationally, phosphorylation at Ser-226 by PKC promotes glucose uptake by increasing cell membrane localization. In terms of tissue distribution, retina (at protein level).

The protein resides in the cell membrane. It is found in the photoreceptor inner segment. It catalyses the reaction D-glucose(out) = D-glucose(in). With respect to regulation, the uptake of glucose is inhibited by cytochalasin B. Glucose uptake is increased in response to phorbol ester 12-O-tetradecanoylphorbol-13-acetate (TPA) treatment: TPA-induced glucose uptake requires phosphorylation at Ser-226. In terms of biological role, facilitative glucose transporter, which is responsible for constitutive or basal glucose uptake. Has a very broad substrate specificity; can transport a wide range of aldoses including both pentoses and hexoses. Most important energy carrier of the brain: present at the blood-brain barrier and assures the energy-independent, facilitative transport of glucose into the brain. In association with BSG and NXNL1, promotes retinal cone survival by increasing glucose uptake into photoreceptors. Required for mesendoderm differentiation. The protein is Solute carrier family 2, facilitated glucose transporter member 1 of Mus musculus (Mouse).